Reading from the N-terminus, the 146-residue chain is Hemoglobin subunit beta (146 aa).

Val1 is subject to N-acetylvaline. The Globin domain maps to 2 to 146 (HLTAEEKSAV…VANALAHKYH (145 aa)). Position 12 is a phosphothreonine (Thr12). Ser44 is subject to Phosphoserine. An N6-acetyllysine modification is found at Lys59. His63 is a heme b binding site. An N6-acetyllysine modification is found at Lys82. A heme b-binding site is contributed by His92. Position 93 is an S-nitrosocysteine (Cys93). Lys144 bears the N6-acetyllysine mark.

Belongs to the globin family. Heterotetramer of two alpha chains and two beta chains. As to expression, red blood cells.

Involved in oxygen transport from the lung to the various peripheral tissues. The protein is Hemoglobin subunit beta (HBB) of Leptonychotes weddellii (Weddell seal).